The sequence spans 122 residues: Large ribosomal subunit protein eL18 (122 aa).

This sequence belongs to the eukaryotic ribosomal protein eL18 family.

In Picrophilus torridus (strain ATCC 700027 / DSM 9790 / JCM 10055 / NBRC 100828 / KAW 2/3), this protein is Large ribosomal subunit protein eL18.